A 2371-amino-acid chain; its full sequence is MAAPESGPALSPGTAEGEEETILYDLLVNTEWPPETEVQPRGNQKHGASFIITKAIRDRLLFLRQYIWYSPAPFLLPDGLVRLVNKQINWHLVLASNGKLLAAVQDQCVEIRSAKDDFTSIIGKCQVPKDPKPQWRRVAWSYDCTLLAYAESTGTVRVFDLMGSELFVISPASSFIGDLSYAIAGLIFLEYKASAQWSAELLVINYRGELRSYLVSVGTNQSYQESHCFSFSSHYPHGINTAIYHPGHRLLLVGGCETAEVGMSKASSCGLSAWRVLSGSPYYKQVTNGGDGVTAVPKTLGLLRMLSVKFYSRQGQEQDGIFKMSLSPDGMLLAAIHFSGKLSIWAIPSLKQQGEWGQNEQPGYDDLNPDWRLSTEKRKKIKDKESFYPLIDVNWWADSAVTLARCSGALTVSSVKTLKNLLGKSCEWFEPSPQVTATHDGGFLSLECEIKLAPKRSRLETRAGEEDEGEEDSDSDYEISAKARYFGYIKQGLYLVTEMERFAPPRKRPRTITKNYRLVSLRSTTPEELYQRKIESEEYEEALSLAHTYGLDTDLVYQRQWRKSAVNVASIQNYLSKIKKRSWVLHECLERVPENVDAAKELLQYGLKGTDLEALLAIGKGADDGRFTLPGEIDIDSISYEELSPPDEEPAKNKKEKELKKRQELLKLVNFSKLTLEQKELCRCRRKLLTYLDRLATYEEILGVPHASEQRYDAEFFKKFRNQNIVLSARTYAQESNVQALEILFTYHGSDLLPHRLAILSNFPETTSPHEYSVLLPEACFNGDSLMIIPWHEHKHRAKDWCEELACRMVVEPNLQDESEFLYAAQPELLRFRMTQLTVEKVMDWYQTRAEEIEHYARQVDCALSLIRLGMERNIPGLLVLCDNLVTLETLVYEARCDVTLTLKELQQMKDIEKLRLLMNSCSEDKYVTSAYQWMVPFLHRCEKQSPGVANELLKEYLVTLAKGDLKFPLKIFQHSKPDLQQKIIPDQDQLMAIALECIYTCERNDQLCLCYDLLECLPERGYGDKTEATTKLHDMVDQLEQILSVSELLEKHGLEKPISFVKNTQSSSEEARKLMVRLTRHTGRKQPPVSESHWRTLLQDMLTMQQNVYTCLDSDACYEIFTESLLCSSRLENIHLAGQMMHCSACSENPPAGIAHKGKPHYRVSYEKSIDLVLAASREYFNSSTNLTDSCMDLARCCLQLITDRPPAIQEELDLIQAVGCLEEFGVKILPLQVRLCPDRISLIKECISQSPTCYKQSTKLLGLAELLRVAGENPEERRGQVLILLVEQALRFHDYKAASMHCQELMATGYPKSWDVCSQLGQSEGYQDLATRQELMAFALTHCPPSSIELLLAASSSLQTEILYQRVNFQIHHEGGENISASPLTSKAVQEDEVGVPGSNSADLLRWTTATTMKVLSNTTTTTKAVLQAVSDGQWWKKSLTYLRPLQGQKCGGAYQIGTTANEDLEKQGCHPFYESVISNPFVAESEGTYDTYQHVPVESFAEVLLRTGKLAEAKNKGEVFPTTEVLLQLASEALPNDMTLALAYLLALPQVLDANRCFEKQSPSALSLQLAAYYYSLQIYARLAPCFRDKCHPLYRADPKELIKMVTRHVTRHEHEAWPEDLISLTKQLHCYNERLLDFTQAQILQGLRKGVDVQRFTADDQYKRETILGLAETLEESVYSIAISLAQRYSVSRWEVFMTHLEFLFTDSGLSTLEIENRAQDLHLFETLKTDPEAFHQHMVKYIYPTIGGFDHERLQYYFTLLENCGCADLGNCAIKPETHIRLLKKFKVVASGLNYKKLTDENMSPLEALEPVLSSQNILSISKLVPKIPEKDGQMLSPSSLYTIWLQKLFWTGDPHLIKQVPGSSPEWLHAYDVCMKYFDRLHPGDLITVVDAVTFSPKAVTKLSVEARKEMTRKAIKTVKHFIEKPRKRNSEDEAQEAKDSKVTYADTLNHLEKSLAHLETLSHSFILSLKNSEQETLQKYSHLYDLSRSEKEKLHDEAVAICLDGQPLAMIQQLLEVAVGPLDISPKDIVQSAIMKIISALSGGSADLGGPRDPLKVLEGVVAAVHASVDKGEELVSPEDLLEWLRPFCADDAWPVRPRIHVLQILGQSFHLTEEDSKLLVFFRTEAILKASWPQRQVDIADIENEENRYCLFMELLESSHHEAEFQHLVLLLQAWPPMKSEYVITNNPWVRLATVMLTRCTMENKEGLGNEVLKMCRSLYNTKQMLPAEGVKELCLLLLNQSLLLPSLKLLLESRDEHLHEMALEQITAVTTVNDSNCDQELLSLLLDAKLLVKCVSTPFYPRIVDHLLASLQQGRWDAEELGRHLREAGHEAEAGSLLLAVRGTHQAFRTFSTALRAAQHWV.

The interval 1 to 1035 is interaction with USE1; that stretch reads MAAPESGPAL…KTEATTKLHD (1035 aa). WD repeat units follow at residues 130–169 and 316–355; these read DPKPQWRRVAWSYDCTLLAYAESTGTVRVFDLMGSELFVI and QEQDGIFKMSLSPDGMLLAAIHFSGKLSIWAIPSLKQQGE. 2 positions are modified to phosphoserine: serine 473 and serine 475. Residues 1036–2371 form an interaction with ZW10 and RINT1 region; it reads MVDQLEQILS…TALRAAQHWV (1336 aa). Residue lysine 1057 is modified to N6-acetyllysine.

In terms of assembly, component of the NRZ complex composed of NBAS, ZW10 and RINT1/TIP20L; NRZ associates with SNAREs STX18, USE1, BNIP1/SEC20L and SEC22B (the assembly has been described as syntaxin 18 complex); links NRZ to SNARE USE1. As to expression, broadly expressed, with highest levels in heart and skeletal muscle, and lowest levels in liver, small intestine and thymus. Well expressed in retinal ganglion cells, epidermal skin cells, and leukocytes. Up-regulated together with N-myc in some neuroblastoma cell lines.

The protein resides in the cytoplasm. It is found in the endoplasmic reticulum. It localises to the endoplasmic reticulum membrane. Functionally, involved in Golgi-to-endoplasmic reticulum (ER) retrograde transport; the function is proposed to depend on its association in the NRZ complex which is believed to play a role in SNARE assembly at the ER. Required for normal embryonic development. May play a role in the nonsense-mediated decay pathway of mRNAs containing premature stop codons. The protein is NBAS subunit of NRZ tethering complex of Homo sapiens (Human).